The following is a 34-amino-acid chain: Photosystem II reaction center protein Psb30 (34 aa).

A helical transmembrane segment spans residues 9 to 29; the sequence is QLIATGTIMLAGPAVIVLLAL.

The protein belongs to the Psb30/Ycf12 family. As to quaternary structure, PSII is composed of 1 copy each of membrane proteins PsbA, PsbB, PsbC, PsbD, PsbE, PsbF, PsbH, PsbI, PsbJ, PsbK, PsbL, PsbM, PsbT, PsbX, PsbY, PsbZ, Psb30/Ycf12, peripheral proteins of the oxygen-evolving complex and a large number of cofactors. It forms dimeric complexes.

It localises to the plastid. The protein resides in the chloroplast thylakoid membrane. A core subunit of photosystem II (PSII), probably helps stabilize the reaction center. The polypeptide is Photosystem II reaction center protein Psb30 (Phaeodactylum tricornutum (strain CCAP 1055/1)).